We begin with the raw amino-acid sequence, 257 residues long: MTDLKLAAQRALNLMDLTTLNDDDTDQKVVDLCRKAKSPAGLTAAVCIYPRFIPIARKTLREIGAADVRIATVTNFPHGNDDIEIAVAETRAAVAYGADEVDVVFPYRAFMAGNEQVGFDLVKACKEACGDKALLKVIIETGELKEEALIRRASEICIDAGADFIKTSTGKVPVNATPEAARIMMEVIKAKNPKVGFKPAGGVKDAAVAGQYLAMAEEILGKEWVSARTFRFGASSLLASLLATLGHGDKPANTSGY.

The active-site Proton donor/acceptor is aspartate 102. Catalysis depends on lysine 166, which acts as the Schiff-base intermediate with acetaldehyde. The active-site Proton donor/acceptor is the lysine 198.

This sequence belongs to the DeoC/FbaB aldolase family. DeoC type 2 subfamily.

It localises to the cytoplasm. The enzyme catalyses 2-deoxy-D-ribose 5-phosphate = D-glyceraldehyde 3-phosphate + acetaldehyde. It functions in the pathway carbohydrate degradation; 2-deoxy-D-ribose 1-phosphate degradation; D-glyceraldehyde 3-phosphate and acetaldehyde from 2-deoxy-alpha-D-ribose 1-phosphate: step 2/2. Functionally, catalyzes a reversible aldol reaction between acetaldehyde and D-glyceraldehyde 3-phosphate to generate 2-deoxy-D-ribose 5-phosphate. The chain is Deoxyribose-phosphate aldolase from Aeromonas salmonicida (strain A449).